Consider the following 1101-residue polypeptide: Protein unc-13 homolog (1101 aa).

The MHD1 domain occupies 663 to 804 (VSVFPAADSL…ASKDDLVPPV (142 aa)). The region spanning 941 to 1051 (QSRLEGLIEA…YETRELIDDL (111 aa)) is the MHD2 domain.

Belongs to the unc-13 family. In terms of tissue distribution, expressed in roots, cotyledons, leaves, stems and flowers. Expressed in guard cells and mesophyll cells of leaves.

Its subcellular location is the cytoplasm. The protein resides in the cell membrane. Its function is as follows. Controls the tethering of the proton ATPase AHA1 to the plasma membrane. Is essential for stomatal opening in response to low concentration of carbon dioxide and light. The protein is Protein unc-13 homolog of Arabidopsis thaliana (Mouse-ear cress).